The following is a 345-amino-acid chain: Dihydroorotase (345 aa).

The Zn(2+) site is built by histidine 13 and histidine 15. Residues 15–17 and asparagine 41 each bind substrate; that span reads HLR. Zn(2+) contacts are provided by lysine 99, histidine 136, and histidine 174. Lysine 99 carries the N6-carboxylysine modification. Substrate is bound at residue histidine 136. Leucine 219 serves as a coordination point for substrate. Aspartate 247 is a binding site for Zn(2+). Residue aspartate 247 is part of the active site. The substrate site is built by histidine 251 and alanine 263.

The protein belongs to the metallo-dependent hydrolases superfamily. DHOase family. Class II DHOase subfamily. In terms of assembly, homodimer. It depends on Zn(2+) as a cofactor.

The enzyme catalyses (S)-dihydroorotate + H2O = N-carbamoyl-L-aspartate + H(+). The protein operates within pyrimidine metabolism; UMP biosynthesis via de novo pathway; (S)-dihydroorotate from bicarbonate: step 3/3. In terms of biological role, catalyzes the reversible cyclization of carbamoyl aspartate to dihydroorotate. The polypeptide is Dihydroorotase (Agrobacterium fabrum (strain C58 / ATCC 33970) (Agrobacterium tumefaciens (strain C58))).